The primary structure comprises 137 residues: Small ribosomal subunit protein uS12 (137 aa).

The disordered stretch occupies residues 1–26 (MPTINQLVRKPRQSKIKKSTSPALNK). Residues 9 to 18 (RKPRQSKIKK) show a composition bias toward basic residues.

This sequence belongs to the universal ribosomal protein uS12 family. Part of the 30S ribosomal subunit. Contacts proteins S8 and S17. May interact with IF1 in the 30S initiation complex.

With S4 and S5 plays an important role in translational accuracy. Its function is as follows. Interacts with and stabilizes bases of the 16S rRNA that are involved in tRNA selection in the A site and with the mRNA backbone. Located at the interface of the 30S and 50S subunits, it traverses the body of the 30S subunit contacting proteins on the other side and probably holding the rRNA structure together. The combined cluster of proteins S8, S12 and S17 appears to hold together the shoulder and platform of the 30S subunit. The sequence is that of Small ribosomal subunit protein uS12 from Listeria innocua serovar 6a (strain ATCC BAA-680 / CLIP 11262).